The chain runs to 172 residues: Inorganic pyrophosphatase (172 aa).

Residues lysine 26, arginine 40, and tyrosine 52 each contribute to the substrate site. Mg(2+) is bound by residues aspartate 62, aspartate 67, and aspartate 99. Tyrosine 138 serves as a coordination point for substrate.

Belongs to the PPase family. As to quaternary structure, homohexamer. Mg(2+) serves as cofactor.

It localises to the cytoplasm. The enzyme catalyses diphosphate + H2O = 2 phosphate + H(+). Functionally, catalyzes the hydrolysis of inorganic pyrophosphate (PPi) forming two phosphate ions. The protein is Inorganic pyrophosphatase of Saccharolobus solfataricus (strain ATCC 35092 / DSM 1617 / JCM 11322 / P2) (Sulfolobus solfataricus).